Consider the following 420-residue polypeptide: Carbohydrate sulfotransferase 1 (420 aa).

A topological domain (cytoplasmic) is located at residue methionine 1. The helical; Signal-anchor for type II membrane protein transmembrane segment at 2–23 threads the bilayer; that stretch reads QCSWKAVILLALVSIAIQYTAI. Residues 24 to 420 lie on the Lumenal side of the membrane; sequence RTFTAKPFHI…IEDKTFIPFL (397 aa). Asparagine 64 carries N-linked (GlcNAc...) asparagine glycosylation. 77-83 provides a ligand contact to 3'-phosphoadenylyl sulfate; it reads TRSGSSF. Asparagine 153 and asparagine 197 each carry an N-linked (GlcNAc...) asparagine glycan. 242–250 provides a ligand contact to 3'-phosphoadenylyl sulfate; it reads RDPRGILSS. Residues asparagine 342 and asparagine 405 are each glycosylated (N-linked (GlcNAc...) asparagine).

Belongs to the sulfotransferase 1 family. Gal/GlcNAc/GalNAc subfamily.

It is found in the golgi apparatus membrane. The catalysed reaction is 3'-phosphoadenylyl sulfate + keratan = adenosine 3',5'-bisphosphate + keratan 6'-sulfate.. Functionally, sulfotransferase that utilizes 3'-phospho-5'-adenylyl sulfate (PAPS) as sulfonate donor to catalyze the transfer of sulfate to position 6 of galactose (Gal) residues of keratan. This chain is Carbohydrate sulfotransferase 1 (chst1), found in Danio rerio (Zebrafish).